The chain runs to 160 residues: Large ribosomal subunit protein uL16 (160 aa).

A disordered region spans residues 138–160 (INLSSDSSGEGKTGKDSKEEVKK). Over residues 149–160 (KTGKDSKEEVKK) the composition is skewed to basic and acidic residues.

It belongs to the universal ribosomal protein uL16 family. As to quaternary structure, part of the 50S ribosomal subunit.

Binds 23S rRNA and is also seen to make contacts with the A and possibly P site tRNAs. This Prochlorococcus marinus subsp. pastoris (strain CCMP1986 / NIES-2087 / MED4) protein is Large ribosomal subunit protein uL16.